The chain runs to 118 residues: Transcriptional regulator WhiB4 (118 aa).

The 57-residue stretch at 36–92 (LCRTTDPDELFVRGAAQRKAAVICRHCPVMQECAADALDNKVEFGVWGGMTERQRRA) folds into the 4Fe-4S Wbl-type domain. 4 residues coordinate [4Fe-4S] cluster: Cys-37, Cys-59, Cys-62, and Cys-68. 2 disulfide bridges follow: Cys-37–Cys-68 and Cys-59–Cys-62.

The protein belongs to the WhiB family. [4Fe-4S] cluster serves as cofactor. In terms of processing, the Fe-S cluster can be nitrosylated by nitric oxide (NO). Post-translationally, upon Fe-S cluster removal intramolecular disulfide bonds are formed.

The protein localises to the cytoplasm. In terms of biological role, acts as a transcriptional regulator. Probably redox-responsive. The apo- but not holo-form probably binds DNA. This Mycobacterium tuberculosis (strain CDC 1551 / Oshkosh) protein is Transcriptional regulator WhiB4 (whiB4).